Reading from the N-terminus, the 428-residue chain is Peptidase B (428 aa).

Mn(2+) is bound by residues Lys-195 and Asp-200. Lys-207 is an active-site residue. Mn(2+)-binding residues include Asp-218, Asp-277, and Glu-279. Residue Arg-281 is part of the active site.

It belongs to the peptidase M17 family. Homohexamer. Requires Mn(2+) as cofactor.

It localises to the cytoplasm. The catalysed reaction is Release of an N-terminal amino acid, Xaa, from a peptide or arylamide. Xaa is preferably Glu or Asp but may be other amino acids, including Leu, Met, His, Cys and Gln.. Probably plays an important role in intracellular peptide degradation. The polypeptide is Peptidase B (Cronobacter sakazakii (strain ATCC BAA-894) (Enterobacter sakazakii)).